Consider the following 164-residue polypeptide: ATP synthase subunit b (164 aa).

A helical transmembrane segment spans residues 8-28; it reads IGLFFWQTIVFLILLFLMAKF.

It belongs to the ATPase B chain family. As to quaternary structure, F-type ATPases have 2 components, F(1) - the catalytic core - and F(0) - the membrane proton channel. F(1) has five subunits: alpha(3), beta(3), gamma(1), delta(1), epsilon(1). F(0) has three main subunits: a(1), b(2) and c(10-14). The alpha and beta chains form an alternating ring which encloses part of the gamma chain. F(1) is attached to F(0) by a central stalk formed by the gamma and epsilon chains, while a peripheral stalk is formed by the delta and b chains.

It localises to the cell membrane. F(1)F(0) ATP synthase produces ATP from ADP in the presence of a proton or sodium gradient. F-type ATPases consist of two structural domains, F(1) containing the extramembraneous catalytic core and F(0) containing the membrane proton channel, linked together by a central stalk and a peripheral stalk. During catalysis, ATP synthesis in the catalytic domain of F(1) is coupled via a rotary mechanism of the central stalk subunits to proton translocation. Functionally, component of the F(0) channel, it forms part of the peripheral stalk, linking F(1) to F(0). The protein is ATP synthase subunit b of Christiangramia forsetii (strain DSM 17595 / CGMCC 1.15422 / KT0803) (Gramella forsetii).